A 372-amino-acid polypeptide reads, in one-letter code: Signal peptide peptidase-like 1 (372 aa).

The Lumenal portion of the chain corresponds to 1–6; the sequence is METLWT. The chain crosses the membrane as a helical span at residues 7–27; the sequence is LLYLLEPAPATLIVTAVTVTF. Residues 28 to 54 lie on the Cytoplasmic side of the membrane; it reads ASAFRALNYGKEMERNRDFSEASITLD. The helical transmembrane segment at 55–77 threads the bilayer; that stretch reads SSQALMIPVMSSCSLLLMFYLFS. Residues 78-81 lie on the Lumenal side of the membrane; the sequence is SVSQ. A helical membrane pass occupies residues 82–104; the sequence is LLTAFTAIASVSSLFYWLSPYAV. The Cytoplasmic segment spans residues 105 to 123; that stretch reads YMKTQLGLSDPFLSRCCSK. The helical transmembrane segment at 124 to 146 threads the bilayer; that stretch reads SFTRIQGLLLVACAMTVVAWLIS. Residues 147-149 are Lumenal-facing; it reads GHW. The helical transmembrane segment at 150–167 threads the bilayer; that stretch reads VLNNLLGISICIAFVSHV. Residues 168–171 lie on the Cytoplasmic side of the membrane; the sequence is RLPN. A helical membrane pass occupies residues 172–192; it reads IKICAMLLVCLFVYDIFWVFF. Asp186 is a catalytic residue. Residues 193 to 257 are Lumenal-facing; the sequence is SERFFGANVM…GVVPGVSASD (65 aa). Residues 258–278 form a helical membrane-spanning segment; sequence FMMLGLGDMAIPAMLLALVLC. Asp265 is a catalytic residue. Over 279–301 the chain is Cytoplasmic; that stretch reads FDHRKTRDVVNIFDLKSSKGHKY. The chain crosses the membrane as a helical span at residues 302 to 322; sequence IWYALPGYAIGLVAALAAGVL. Over 323–325 the chain is Lumenal; the sequence is THS. The helical transmembrane segment at 326–346 threads the bilayer; it reads PQPALLYLVPSTLGPVIFMSW. The PAL motif lies at 328 to 330; it reads PAL. Residues 347–372 lie on the Cytoplasmic side of the membrane; the sequence is RRKDLAELWEGPALSNPIEKSHEIEI.

Belongs to the peptidase A22B family. Ubiquitous.

The protein resides in the endosome membrane. Functionally, intramembrane-cleaving aspartic protease (I-CLiP) that cleaves type II membrane signal peptides in the hydrophobic plane of the membrane. The polypeptide is Signal peptide peptidase-like 1 (SPPL1) (Arabidopsis thaliana (Mouse-ear cress)).